The chain runs to 452 residues: Chromosomal replication initiator protein DnaA (452 aa).

Positions 1-72 are domain I, interacts with DnaA modulators; that stretch reads MPDMLTLWTD…LVEYAYQAAH (72 aa). A domain II region spans residues 72-114; sequence HEDIQPVLILENERQQQATLKAKTAPVAAGEPVEPTPTFMKET. Positions 115-331 are domain III, AAA+ region; the sequence is ALNSRYTFDT…GALARVQAYS (217 aa). Residues glycine 159, glycine 161, lysine 162, and threonine 163 each coordinate ATP. The tract at residues 332-452 is domain IV, binds dsDNA; that stretch reads QLMHQPIATD…IDSLKDDLRR (121 aa).

Belongs to the DnaA family. In terms of assembly, oligomerizes as a right-handed, spiral filament on DNA at oriC.

It localises to the cytoplasm. In terms of biological role, plays an essential role in the initiation and regulation of chromosomal replication. ATP-DnaA binds to the origin of replication (oriC) to initiate formation of the DNA replication initiation complex once per cell cycle. Binds the DnaA box (a 9 base pair repeat at the origin) and separates the double-stranded (ds)DNA. Forms a right-handed helical filament on oriC DNA; dsDNA binds to the exterior of the filament while single-stranded (ss)DNA is stabiized in the filament's interior. The ATP-DnaA-oriC complex binds and stabilizes one strand of the AT-rich DNA unwinding element (DUE), permitting loading of DNA polymerase. After initiation quickly degrades to an ADP-DnaA complex that is not apt for DNA replication. Binds acidic phospholipids. This is Chromosomal replication initiator protein DnaA from Levilactobacillus brevis (strain ATCC 367 / BCRC 12310 / CIP 105137 / JCM 1170 / LMG 11437 / NCIMB 947 / NCTC 947) (Lactobacillus brevis).